Here is a 326-residue protein sequence, read N- to C-terminus: Thiazole synthase (326 aa).

The active-site Schiff-base intermediate with DXP is the K168. 1-deoxy-D-xylulose 5-phosphate is bound by residues G229, 255-256 (AG), and 277-278 (NT).

The protein belongs to the ThiG family. In terms of assembly, homotetramer. Forms heterodimers with either ThiH or ThiS.

The protein resides in the cytoplasm. The catalysed reaction is [ThiS sulfur-carrier protein]-C-terminal-Gly-aminoethanethioate + 2-iminoacetate + 1-deoxy-D-xylulose 5-phosphate = [ThiS sulfur-carrier protein]-C-terminal Gly-Gly + 2-[(2R,5Z)-2-carboxy-4-methylthiazol-5(2H)-ylidene]ethyl phosphate + 2 H2O + H(+). Its pathway is cofactor biosynthesis; thiamine diphosphate biosynthesis. Its function is as follows. Catalyzes the rearrangement of 1-deoxy-D-xylulose 5-phosphate (DXP) to produce the thiazole phosphate moiety of thiamine. Sulfur is provided by the thiocarboxylate moiety of the carrier protein ThiS. In vitro, sulfur can be provided by H(2)S. The chain is Thiazole synthase from Magnetococcus marinus (strain ATCC BAA-1437 / JCM 17883 / MC-1).